Here is a 438-residue protein sequence, read N- to C-terminus: MLRTHYSNEITEELNGKRVKVAGWVQEVKDLGGIKFIWIRDREGIVQVTAPKKKVSQEIFKLIPKLNSEDVIVVEGIVNFTPKAKLGFEVIPEKLEVISRAKTPLPLDPTGKVKAELDTRLDNRFMDLRNPKVMAIFKIRSSVFRAVREFFYSEGFIEIHTPKIIATATEGGTELFPLKYFERDAFLAQSPQLYKQMMMATGLDKVFEIAPIFRAEEHNTTRHLNEAWSIDAEMAFIENEGEVMDLLERLISYVINYVREHNEKELKTLEFELNEPKRPFPRITYDKALEILSDLGKEIPWGEDIDTEGEKLLGKYMAENEGADLYFIYRYPSEAKPFYIMKYDEKPEVCRAFDLEYRGVEISSGGQREHRHDVLLEQIKEKGLNPKSFEFYLKAFEYGMPPHGGFGLGAERLIMRMLDIGNIREVILFPRDRRRLVP.

E170 contacts L-aspartate. An aspartate region spans residues 192-195 (QLYK). An L-aspartate-binding site is contributed by R214. Residues 214 to 216 (RAE), 222 to 224 (RHL), and E361 contribute to the ATP site. Mg(2+)-binding residues include E361 and S364. L-aspartate-binding residues include S364 and R368. 409–412 (GAER) contributes to the ATP binding site.

It belongs to the class-II aminoacyl-tRNA synthetase family. Type 2 subfamily. In terms of assembly, homodimer. Mg(2+) serves as cofactor.

Its subcellular location is the cytoplasm. It carries out the reaction tRNA(Asp) + L-aspartate + ATP = L-aspartyl-tRNA(Asp) + AMP + diphosphate. In terms of biological role, catalyzes the attachment of L-aspartate to tRNA(Asp) in a two-step reaction: L-aspartate is first activated by ATP to form Asp-AMP and then transferred to the acceptor end of tRNA(Asp). The protein is Aspartate--tRNA(Asp) ligase of Pyrococcus horikoshii (strain ATCC 700860 / DSM 12428 / JCM 9974 / NBRC 100139 / OT-3).